We begin with the raw amino-acid sequence, 1273 residues long: Chitin synthase 7 (1273 aa).

Positions 1 to 69 (MPAVERNAPF…LINPSSGGPG (69 aa)) are disordered. The Cytoplasmic portion of the chain corresponds to 1–79 (MPAVERNAPF…FSAASRSKHR (79 aa)). Residues 80-100 (FSWWTAFSLFVTFWAPSPLLS) traverse the membrane as a helical segment. The Extracellular segment spans residues 101–117 (SCCGLKDKQSRQAWREK). The helical transmembrane segment at 118–138 (VSLVFIAILLGGFIGFITMGL) threads the bilayer. Over 139-360 (NAALCPSASS…FISNLVLYCS (222 aa)) the chain is Cytoplasmic. The helical transmembrane segment at 361–381 (LVVILAIVLIRFFMAVWFAWF) threads the bilayer. Topologically, residues 382-820 (MAGRMSSPPR…LCGTFCFSMQ (439 aa)) are extracellular. N-linked (GlcNAc...) asparagine glycosylation is present at asparagine 412. The segment at 416 to 451 (AAPWANKQRPPPSQPARRRRDSAQSATPSVPDSLSV) is disordered. N-linked (GlcNAc...) asparagine glycosylation is found at asparagine 667 and asparagine 796. A helical membrane pass occupies residues 821–841 (FVVFMDLLGTAVLPISIALTY). Topologically, residues 842–857 (TLVVTYCLNPPHSFTE) are cytoplasmic. The helical transmembrane segment at 858–878 (AIPLMLLVAVIGMPALLILLA) threads the bilayer. The Extracellular portion of the chain corresponds to 879 to 881 (TRK). A helical transmembrane segment spans residues 882–902 (VVYVLWMLIYLLALPVWNFVL). The Cytoplasmic portion of the chain corresponds to 903-1273 (PVYSFWHFDD…RGRSYHDRFS (371 aa)). Disordered regions lie at residues 966-1009 (RELE…SVTV) and 1126-1273 (NGGG…DRFS). Positions 1000–1009 (SDSFSDSVTV) are enriched in low complexity. A compositionally biased stretch (pro residues) spans 1215–1232 (QHPPQPSQPPQPPQPAQP). The segment covering 1233–1246 (TRPGGAPAAPPRGA) has biased composition (low complexity).

The protein belongs to the chitin synthase family. Class IV subfamily.

It localises to the cell membrane. It is found in the cytoplasmic vesicle membrane. The enzyme catalyses [(1-&gt;4)-N-acetyl-beta-D-glucosaminyl](n) + UDP-N-acetyl-alpha-D-glucosamine = [(1-&gt;4)-N-acetyl-beta-D-glucosaminyl](n+1) + UDP + H(+). Polymerizes chitin, a structural polymer of the cell wall and septum, by transferring the sugar moiety of UDP-GlcNAc to the non-reducing end of the growing chitin polymer. The protein is Chitin synthase 7 of Mycosarcoma maydis (Corn smut fungus).